The primary structure comprises 198 residues: Probable nicotinate-nucleotide adenylyltransferase (198 aa).

The protein belongs to the NadD family.

It catalyses the reaction nicotinate beta-D-ribonucleotide + ATP + H(+) = deamido-NAD(+) + diphosphate. Its pathway is cofactor biosynthesis; NAD(+) biosynthesis; deamido-NAD(+) from nicotinate D-ribonucleotide: step 1/1. Functionally, catalyzes the reversible adenylation of nicotinate mononucleotide (NaMN) to nicotinic acid adenine dinucleotide (NaAD). This is Probable nicotinate-nucleotide adenylyltransferase from Chlorobium phaeobacteroides (strain BS1).